Consider the following 395-residue polypeptide: Elongation factor Tu (395 aa).

One can recognise a tr-type G domain in the interval 10 to 204 (KPHLNIGTIG…TVDNYIKEPI (195 aa)). Positions 19-26 (GHVDHGKT) are G1. 19 to 26 (GHVDHGKT) contacts GTP. Threonine 26 is a Mg(2+) binding site. The segment at 60-64 (GITIN) is G2. Residues 81–84 (DCPG) are G3. Residues 81-85 (DCPGH) and 136-139 (NKVD) each bind GTP. The interval 136–139 (NKVD) is G4. The interval 174–176 (SAL) is G5.

This sequence belongs to the TRAFAC class translation factor GTPase superfamily. Classic translation factor GTPase family. EF-Tu/EF-1A subfamily. Monomer.

The protein localises to the cytoplasm. It catalyses the reaction GTP + H2O = GDP + phosphate + H(+). Functionally, GTP hydrolase that promotes the GTP-dependent binding of aminoacyl-tRNA to the A-site of ribosomes during protein biosynthesis. The protein is Elongation factor Tu of Karelsulcia muelleri (strain GWSS) (Sulcia muelleri).